A 202-amino-acid chain; its full sequence is GTP cyclohydrolase 1 (202 aa).

Residues Cys-90, His-93, and Cys-163 each coordinate Zn(2+).

Belongs to the GTP cyclohydrolase I family. As to quaternary structure, homomer.

The enzyme catalyses GTP + H2O = 7,8-dihydroneopterin 3'-triphosphate + formate + H(+). It participates in cofactor biosynthesis; 7,8-dihydroneopterin triphosphate biosynthesis; 7,8-dihydroneopterin triphosphate from GTP: step 1/1. The polypeptide is GTP cyclohydrolase 1 (Mycolicibacterium gilvum (strain PYR-GCK) (Mycobacterium gilvum (strain PYR-GCK))).